The following is a 311-amino-acid chain: Tyrosine recombinase XerD (311 aa).

Positions 1-83 (MEFIAQFLEM…TIKSYYAFLI (83 aa)) constitute a Core-binding (CB) domain. The region spanning 104-299 (KLPIILSIDQ…HTNHLKKALL (196 aa)) is the Tyr recombinase domain. Residues Arg145, Lys176, His251, Arg254, and His277 contribute to the active site. The O-(3'-phospho-DNA)-tyrosine intermediate role is filled by Tyr286.

This sequence belongs to the 'phage' integrase family. XerD subfamily. In terms of assembly, forms a cyclic heterotetrameric complex composed of two molecules of XerC and two molecules of XerD.

It localises to the cytoplasm. Functionally, site-specific tyrosine recombinase, which acts by catalyzing the cutting and rejoining of the recombining DNA molecules. The XerC-XerD complex is essential to convert dimers of the bacterial chromosome into monomers to permit their segregation at cell division. It also contributes to the segregational stability of plasmids. This is Tyrosine recombinase XerD from Rickettsia prowazekii (strain Madrid E).